The primary structure comprises 223 residues: uncharacterized protein (223 aa).

A Response regulatory domain is found at 5-116; the sequence is RILIVEDDVM…ELLLRMRNML (112 aa). D52 carries the 4-aspartylphosphate modification. Positions 121 to 219 form a DNA-binding region, ompR/PhoB-type; sequence GTFTQIKHLY…IYGEGYRLNT (99 aa).

Phosphorylated by YbdK.

It is found in the cytoplasm. In terms of biological role, member of the two-component regulatory system YbdK/YbdJ. This is an uncharacterized protein from Bacillus subtilis (strain 168).